Here is a 158-residue protein sequence, read N- to C-terminus: Salt stress-responsive protein YocM (158 aa).

Residues 51–158 enclose the sHSP domain; sequence GKGDASFPSM…GQAKTIVIDD (108 aa).

This sequence belongs to the small heat shock protein (HSP20) family. As to quaternary structure, forms homodimers, homotetramers and higher oligomers.

The protein localises to the cytoplasm. Functionally, part of the cellular protein quality control system with a specific role in salt stress response. May facilitate protein homeostasis, together with chemical chaperones that accumulate during the salt stress response. Increased levels of YocM protects against both heat and salt stress. In vitro, displays an unusual aggregase chaperone activity. The polypeptide is Salt stress-responsive protein YocM (yocM) (Bacillus subtilis (strain 168)).